The primary structure comprises 291 residues: tRNA pseudouridine synthase-like 1 (291 aa).

Aspartate 66 (nucleophile) is an active-site residue. Tyrosine 130 lines the substrate pocket.

The protein belongs to the tRNA pseudouridine synthase TruA family.

The catalysed reaction is a uridine in tRNA = a pseudouridine in tRNA. The sequence is that of tRNA pseudouridine synthase-like 1 (Pusl1) from Mus musculus (Mouse).